The chain runs to 605 residues: Heparan-sulfate 6-O-sulfotransferase 2 (605 aa).

Residues 1-4 are Cytoplasmic-facing; the sequence is MALP. A disordered region spans residues 1 to 66; sequence MALPACAVRE…GVSHGFHTRP (66 aa). The helical; Signal-anchor for type II membrane protein transmembrane segment at 5 to 27 threads the bilayer; it reads ACAVREFEPPRQPERGAPVRTTC. The span at 9 to 18 shows a compositional bias: basic and acidic residues; it reads REFEPPRQPE. Residues 28–605 lie on the Lumenal side of the membrane; that stretch reads PRRHSRVEAE…DYIGSVEKWR (578 aa). Asn209 carries an N-linked (GlcNAc...) asparagine glycan. 233–241 contacts 3'-phosphoadenylyl sulfate; that stretch reads HIQKTGGTT. Substrate contacts are provided by residues 263–264, Arg280, Trp285, and His290; that span reads KK. His290 serves as the catalytic Proton acceptor. Positions 325 and 333 each coordinate 3'-phosphoadenylyl sulfate. Substrate contacts are provided by His337 and Trp344. A glycan (N-linked (GlcNAc...) asparagine) is linked at Asn404. 457 to 459 is a binding site for 3'-phosphoadenylyl sulfate; that stretch reads TQY. The N-linked (GlcNAc...) asparagine glycan is linked to Asn460. Position 463 to 464 (463 to 464) interacts with 3'-phosphoadenylyl sulfate; it reads RA. Residues 530 to 605 form a disordered region; that stretch reads FQSQGQGQSQ…DYIGSVEKWR (76 aa). Residues 531 to 571 show a composition bias toward low complexity; the sequence is QSQGQGQSQNPNQNQSQNPNPNANQNLTQNLMQNLTQSLSQ. Residues Asn544, Asn556, Asn564, Asn589, and Asn592 are each glycosylated (N-linked (GlcNAc...) asparagine). A compositionally biased stretch (polar residues) spans 579-597; that stretch reads KQNSGKEQNDNTSNGTNDY.

This sequence belongs to the sulfotransferase 6 family.

Its subcellular location is the membrane. The catalysed reaction is alpha-D-glucosaminyl-[heparan sulfate](n) + 3'-phosphoadenylyl sulfate = 6-sulfo-alpha-D-glucosaminyl-[heparan sulfate](n) + adenosine 3',5'-bisphosphate + H(+). Functionally, 6-O-sulfation enzyme which catalyzes the transfer of sulfate from 3'-phosphoadenosine 5'-phosphosulfate (PAPS) to position 6 of the N-sulfoglucosamine residue (GlcNS) of heparan sulfate. In Homo sapiens (Human), this protein is Heparan-sulfate 6-O-sulfotransferase 2.